The following is a 1372-amino-acid chain: DNA-directed RNA polymerase subunit beta' (1372 aa).

Cysteine 69, cysteine 71, cysteine 84, and cysteine 87 together coordinate Zn(2+). Mg(2+) contacts are provided by aspartate 460, aspartate 462, and aspartate 464. Positions 808, 882, 889, and 892 each coordinate Zn(2+).

Belongs to the RNA polymerase beta' chain family. As to quaternary structure, the RNAP catalytic core consists of 2 alpha, 1 beta, 1 beta' and 1 omega subunit. When a sigma factor is associated with the core the holoenzyme is formed, which can initiate transcription. Mg(2+) serves as cofactor. Zn(2+) is required as a cofactor.

The catalysed reaction is RNA(n) + a ribonucleoside 5'-triphosphate = RNA(n+1) + diphosphate. Its function is as follows. DNA-dependent RNA polymerase catalyzes the transcription of DNA into RNA using the four ribonucleoside triphosphates as substrates. This is DNA-directed RNA polymerase subunit beta' from Rickettsia rickettsii (strain Iowa).